We begin with the raw amino-acid sequence, 172 residues long: Myosin regulatory light chain RLC-A (172 aa).

The span at 1–16 (MSSKRAKTKTTKKRPQ) shows a compositional bias: basic residues. The segment at 1–20 (MSSKRAKTKTTKKRPQRATS) is disordered. Thr19 is modified (phosphothreonine; by MLCK). Ser20 is subject to Phosphoserine; by MLCK. EF-hand domains lie at 29 to 64 (SQIQ…MGKN), 98 to 133 (DPED…MGDR), and 134 to 169 (FTDE…GAKD). The Ca(2+) site is built by Asp42, Asn44, Asp46, and Asp53.

As to quaternary structure, myosin is a hexamer of 2 heavy chains and 4 light chains. In terms of processing, phosphorylation increases the actin-activated myosin ATPase activity and thereby regulates the contractile activity.

Myosin regulatory subunit that plays an important role in regulation of both smooth muscle and nonmuscle cell contractile activity via its phosphorylation. Implicated in cytokinesis, receptor capping, and cell locomotion. The chain is Myosin regulatory light chain RLC-A (Rlc-a) from Rattus norvegicus (Rat).